The following is a 98-amino-acid chain: DNA-binding protein Fis (98 aa).

Positions 74-93 (QTRAALMMGINRGTLRKKLK) form a DNA-binding region, H-T-H motif.

It belongs to the transcriptional regulatory Fis family. In terms of assembly, homodimer.

Activates ribosomal RNA transcription. Plays a direct role in upstream activation of rRNA promoters. In Citrobacter koseri (strain ATCC BAA-895 / CDC 4225-83 / SGSC4696), this protein is DNA-binding protein Fis.